We begin with the raw amino-acid sequence, 350 residues long: Guanine nucleotide-binding protein G(t) subunit alpha-1 (350 aa).

Residues 1-21 are disordered; the sequence is MGAGASAEEKHSRELEKKLKE. The N-myristoyl glycine moiety is linked to residue glycine 2. The segment covering 7 to 21 has biased composition (basic and acidic residues); that stretch reads AEEKHSRELEKKLKE. The 323-residue stretch at 28-350 folds into the G-alpha domain; it reads RTVKLLLLGA…KENLKDCGLF (323 aa). A G1 motif region spans residues 31-44; sequence KLLLLGAGESGKST. Residue 36–43 coordinates GTP; that stretch reads GAGESGKS. Serine 43 is a Mg(2+) binding site. Tyrosine 142 carries the phosphotyrosine modification. Residues aspartate 146, 171–177, glycine 199, 265–268, and alanine 322 contribute to the GTP site; these read LRSRVKT and NKKD. Residues 169-177 are G2 motif; that stretch reads DVLRSRVKT. Threonine 177 serves as a coordination point for Mg(2+). The tract at residues 192 to 201 is G3 motif; sequence FRMFDVGGQR. Residues 261-268 are G4 motif; that stretch reads VLFLNKKD. Residues 320 to 325 form a G5 motif region; the sequence is TCATDT. The segment at 340 to 350 is interaction with RHO; sequence IKENLKDCGLF.

This sequence belongs to the G-alpha family. G(i/o/t/z) subfamily. As to quaternary structure, heterotrimeric G proteins are composed of 3 subunits alpha, beta and gamma. The alpha chain contains the guanine nucleotide binding site. Interacts with RHO. Interacts with RGS9 and PDE6G. Interacts (when myristoylated) with UNC119; interaction is required for localization in sensory neurons. In terms of tissue distribution, in the retina, expressed in the rod photoreceptors.

The protein resides in the cell projection. Its subcellular location is the cilium. The protein localises to the photoreceptor outer segment. It localises to the membrane. It is found in the photoreceptor inner segment. Its function is as follows. Functions as a signal transducer for the rod photoreceptor RHO. Required for normal RHO-mediated light perception by the retina. Guanine nucleotide-binding proteins (G proteins) function as transducers downstream of G protein-coupled receptors (GPCRs), such as the photoreceptor RHO. The alpha chain contains the guanine nucleotide binding site and alternates between an active, GTP-bound state and an inactive, GDP-bound state. Activated RHO promotes GDP release and GTP binding. Signaling is mediated via downstream effector proteins, such as cGMP-phosphodiesterase. The polypeptide is Guanine nucleotide-binding protein G(t) subunit alpha-1 (Gnat1) (Mus musculus (Mouse)).